The following is a 386-amino-acid chain: Interleukin-13 receptor subunit alpha-2 (386 aa).

The N-terminal stretch at 1–21 (MAFIHLDVGFLYTLLVCTAFG) is a signal peptide. The Extracellular portion of the chain corresponds to 22–338 (SMLSNAEIKV…CWKGDIWKET (317 aa)). Fibronectin type-III domains lie at 33–133 (PPQD…SPQG), 138–234 (KIQD…LQNI), and 239–338 (PPDY…WKET). A disulfide bridge links Cys-64 with Cys-112. An N-linked (GlcNAc...) asparagine glycan is attached at Asn-114. Disulfide bonds link Cys-144–Cys-154 and Cys-183–Cys-196. N-linked (GlcNAc...) asparagine glycosylation is found at Asn-214 and Asn-298. Cys-268 and Cys-315 are disulfide-bonded. The WSXWS motif signature appears at 321 to 325 (WSEWS). Residues 339-359 (LVFFLIPFAFVSIFVLVITCL) form a helical membrane-spanning segment. The Cytoplasmic portion of the chain corresponds to 360-386 (LLYKQRALLKTIFHTKKEVFSHQDTFC).

The protein belongs to the type I cytokine receptor family. Type 5 subfamily. In terms of assembly, interacts with IL4RA. Interacts with high affinity to interleukin-13 (IL13), but not to interleukin-4 (IL4). In terms of processing, cleaved by MMP8 leading to a soluble form that is also able to interact with IL13. Expressed in kidney, placenta, liver, skeletal muscle and thymus. Expression was not seen in whole blood and heart.

Its subcellular location is the cell membrane. Its function is as follows. Cell surface receptor that plays a role in the regulation of IL-13-mediated responses. Functions as a decoy receptor that inhibits IL-13- and IL-4-mediated signal transduction via the JAK-STAT pathway and thereby modulates immune responses and inflammation. Serves as a functional signaling receptor for IL-13 in an alternative pathway involving AP-1 ultimately leading to the production of TGFB1. In Canis lupus familiaris (Dog), this protein is Interleukin-13 receptor subunit alpha-2 (IL13RA2).